The primary structure comprises 404 residues: Protrudin (404 aa).

Residues 1 to 20 (MQTSEREGCGPEVSPSTVPE) are disordered. Residues 1-66 (MQTSEREGCG…AGDGVRYLLR (66 aa)) are Cytoplasmic-facing. The tract at residues 1–92 (MQTSEREGCG…LFLTLNEGAW (92 aa)) is sufficient for homooligomerization. A sufficient for localization to endoplasmic reticulum tubular network and for interactions with REEP1, REEP5, ATL1, ATL2, ATL3 and SPAST region spans residues 1–205 (MQTSEREGCG…LYLLPLCWVL (205 aa)). Residues 51 to 64 (LEPLKDAGDGVRYL) form a necessary for interaction with RAB11A and function in neurite outgrowth region. A helical membrane pass occupies residues 67–87 (WQTPLCSLLTCLGLNVLFLTL). Position 88 (N88) is a topological domain, lumenal. The chain crosses the membrane as a helical span at residues 89–109 (EGAWYSVGALMISVPALLGYL). Residues 110 to 187 (QEGCQARLSE…NPAVSSQFYG (78 aa)) are Cytoplasmic-facing. The helical intramembrane region spans 188-208 (ALLGTVCMLYLLPLCWVLALL). Residues 209–404 (NSTLFLGNVE…CASCNQTLSK (196 aa)) lie on the Cytoplasmic side of the membrane. The segment at 234-286 (MNPKQEESAFESPPPSDAGGKGALVDCTPAPTPTEDLTPGSVEEAEEAEPDEE) is disordered. The necessary for interaction with KIF5A stretch occupies residues 271 to 354 (TPGSVEEAEE…GCSATFSVLK (84 aa)). Positions 276–286 (EEAEEAEPDEE) are enriched in acidic residues. The necessary for interaction with VAPA stretch occupies residues 286–292 (EFKDAIE). The FYVE-type zinc finger occupies 337 to 403 (TNNYGSCTGC…VCASCNQTLS (67 aa)). Positions 343, 346, 359, 362, 367, 370, 395, and 398 each coordinate Zn(2+).

As to quaternary structure, can form homooligomers (monomers, dimers and tetramers). Interacts with RAB11A (GDP-bound form); regulates RAB11A. Interacts with FKBP8; may negatively regulate ZFYVE27 phosphorylation. Interacts with VAPA (via MSP domain); may regulate ZFYVE27 retention in the endoplasmic reticulum and its function in cell projections formation. Interacts with VAPB (via MSP domain). Interacts with RAB11B (GDP-bound form), REEP1, REEP5, ATL1, ATL2, ATL3, SPAST, SURF4, KIF5A, KIF5B, KIF5C and RTN3. Phosphorylated. Phosphorylation is induced by NGF through the MAPK/ERK pathway and modulates interaction with RAB11A.

The protein resides in the recycling endosome membrane. It localises to the endoplasmic reticulum membrane. It is found in the cell projection. Its subcellular location is the growth cone membrane. Its function is as follows. Key regulator of RAB11-dependent vesicular trafficking during neurite extension through polarized membrane transport. Promotes axonal elongation and contributes to the establishment of neuronal cell polarity. Involved in nerve growth factor-induced neurite formation in VAPA-dependent manner. Contributes to both the formation and stabilization of the tubular ER network. Involved in ER morphogenesis by regulating the sheet-to-tubule balance and possibly the density of tubule interconnections. Acts as an adapter protein that facilitates the interaction of KIF5A with VAPA, VAPB, SURF4, RAB11A, RAB11B and RTN3 and the ZFYVE27-KIF5A complex contributes to the transport of these proteins in neurons. Can induce formation of neurite-like membrane protrusions in non-neuronal cells in a KIF5A/B-dependent manner. In Bos taurus (Bovine), this protein is Protrudin (ZFYVE27).